The sequence spans 446 residues: D(1A) dopamine receptor (446 aa).

The Extracellular portion of the chain corresponds to Met1–Arg22. Residue Asn4 is glycosylated (N-linked (GlcNAc...) asparagine). Residues Ile23–Ile48 traverse the membrane as a helical segment. Topologically, residues Arg49–Asn59 are cytoplasmic. Residues Phe60 to Ala86 form a helical membrane-spanning segment. Residues Gly87–Cys95 lie on the Extracellular side of the membrane. The cysteines at positions 95 and 186 are disulfide-linked. A helical membrane pass occupies residues Asn96–Val118. Residues Asp119–Lys137 lie on the Cytoplasmic side of the membrane. A helical membrane pass occupies residues Ala138–Trp162. Over His163–Arg192 the chain is Extracellular. Residues Thr193–Tyr218 traverse the membrane as a helical segment. Topologically, residues Arg219–Lys272 are cytoplasmic. A helical membrane pass occupies residues Thr273–Gly299. Over Ser300–Thr312 the chain is Extracellular. Residues Phe313–Phe337 traverse the membrane as a helical segment. Residues Gln338–Thr446 are Cytoplasmic-facing. 2 S-palmitoyl cysteine lipidation sites follow: Cys347 and Cys351. Position 441 is a phosphoserine (Ser441).

Belongs to the G-protein coupled receptor 1 family. In terms of assembly, interacts with DNAJC14 via its C-terminus. Interacts with DRD2. Interacts with DORIP1.

The protein resides in the cell membrane. It localises to the endoplasmic reticulum membrane. Its subcellular location is the cell projection. It is found in the cilium membrane. The protein localises to the dendrite. The protein resides in the dendritic spine. In terms of biological role, dopamine receptor whose activity is mediated by G proteins which activate adenylyl cyclase. This chain is D(1A) dopamine receptor (Drd1), found in Mus musculus (Mouse).